An 89-amino-acid chain; its full sequence is Acylphosphatase (89 aa).

The 87-residue stretch at 3–89 (HIHLQVFGRV…NQKLSDFRSI (87 aa)) folds into the Acylphosphatase-like domain. Active-site residues include arginine 18 and asparagine 36.

The protein belongs to the acylphosphatase family.

It catalyses the reaction an acyl phosphate + H2O = a carboxylate + phosphate + H(+). This Staphylococcus aureus (strain Mu3 / ATCC 700698) protein is Acylphosphatase (acyP).